Here is a 501-residue protein sequence, read N- to C-terminus: Aspartate--tRNA ligase, cytoplasmic (501 aa).

A Phosphothreonine modification is found at Thr-52. Lys-74 carries the post-translational modification N6-acetyllysine. Residue Glu-229 coordinates L-aspartate. Position 249 is a phosphoserine (Ser-249). An aspartate region spans residues 251–254 (QLYK). An L-aspartate-binding site is contributed by Arg-273. Residues 273–275 (RAE) and 281–283 (RHL) contribute to the ATP site. At Lys-374 the chain carries N6-acetyllysine. Glu-424 contributes to the ATP binding site. L-aspartate contacts are provided by Ser-427 and Arg-431. Residue 472-475 (GLER) coordinates ATP.

This sequence belongs to the class-II aminoacyl-tRNA synthetase family. Type 2 subfamily. As to quaternary structure, homodimer. Part of a multisubunit complex that groups tRNA ligases for Arg (RARS1), Asp (DARS1), Gln (QARS1), Ile (IARS1), Leu (LARS1), Lys (KARS1), Met (MARS1) the bifunctional ligase for Glu and Pro (EPRS1) and the auxiliary subunits AIMP1/p43, AIMP2/p38 and EEF1E1/p18.

The protein resides in the cytoplasm. The enzyme catalyses tRNA(Asp) + L-aspartate + ATP = L-aspartyl-tRNA(Asp) + AMP + diphosphate. Its function is as follows. Catalyzes the specific attachment of an amino acid to its cognate tRNA in a 2 step reaction: the amino acid (AA) is first activated by ATP to form AA-AMP and then transferred to the acceptor end of the tRNA. This chain is Aspartate--tRNA ligase, cytoplasmic (Dars1), found in Rattus norvegicus (Rat).